A 204-amino-acid polypeptide reads, in one-letter code: General odorant-binding protein 67 (204 aa).

An N-terminal signal peptide occupies residues 1–22 (MNPVVCAFGVIFVVVTLELVVA). Intrachain disulfides connect C57/C85, C81/C147, and C128/C157.

It belongs to the PBP/GOBP family.

It is found in the secreted. Present in the aqueous fluid surrounding olfactory sensory dendrites and are thought to aid in the capture and transport of hydrophobic odorants into and through this fluid. This Anopheles gambiae (African malaria mosquito) protein is General odorant-binding protein 67 (Obp67).